The primary structure comprises 119 residues: MARFVVVALLALLSLSGLEAIQHAPKIQVYSRHPAENGKPNFLNCYVSGFHPSDIEVDLLKNGKKIEKVEHSDLSFSKDWSFYLLYYTEFTPNEKDEYACRVSHVTFPTPKTVKWDRTM.

The first 20 residues, 1–20 (MARFVVVALLALLSLSGLEA), serve as a signal peptide directing secretion. The region spanning 25–114 (PKIQVYSRHP…VTFPTPKTVK (90 aa)) is the Ig-like C1-type domain. C45 and C100 are joined by a disulfide.

The protein belongs to the beta-2-microglobulin family. In terms of assembly, heterodimer of an alpha chain and a beta chain. Beta-2-microglobulin is the beta-chain of major histocompatibility complex class I molecules.

Its subcellular location is the secreted. Functionally, component of the class I major histocompatibility complex (MHC). Involved in the presentation of peptide antigens to the immune system. This chain is Beta-2-microglobulin (B2M), found in Alouatta seniculus (Red howler monkey).